A 61-amino-acid polypeptide reads, in one-letter code: Large ribosomal subunit protein uL30 (61 aa).

It belongs to the universal ribosomal protein uL30 family. Part of the 50S ribosomal subunit.

This Fervidobacterium nodosum (strain ATCC 35602 / DSM 5306 / Rt17-B1) protein is Large ribosomal subunit protein uL30.